The primary structure comprises 725 residues: Fatty acid oxidation complex subunit alpha (725 aa).

Residues 1–189 form an enoyl-CoA hydratase/isomerase region; sequence MIYQGENLSV…ALGMIDGVVS (189 aa). Asp296 provides a ligand contact to substrate. The segment at 311–725 is 3-hydroxyacyl-CoA dehydrogenase; the sequence is EPVTSAAVLG…APQSLSAPSA (415 aa). Residues Met324, Asp343, 400–402, Lys407, and Ser429 each bind NAD(+); that span reads VVE. Catalysis depends on His450, which acts as the For 3-hydroxyacyl-CoA dehydrogenase activity. NAD(+) is bound at residue Asn453. The substrate site is built by Asn500 and Tyr660.

The protein in the N-terminal section; belongs to the enoyl-CoA hydratase/isomerase family. In the C-terminal section; belongs to the 3-hydroxyacyl-CoA dehydrogenase family. Heterotetramer of two alpha chains (FadB) and two beta chains (FadA).

It carries out the reaction a (3S)-3-hydroxyacyl-CoA + NAD(+) = a 3-oxoacyl-CoA + NADH + H(+). The enzyme catalyses a (3S)-3-hydroxyacyl-CoA = a (2E)-enoyl-CoA + H2O. The catalysed reaction is a 4-saturated-(3S)-3-hydroxyacyl-CoA = a (3E)-enoyl-CoA + H2O. It catalyses the reaction (3S)-3-hydroxybutanoyl-CoA = (3R)-3-hydroxybutanoyl-CoA. It carries out the reaction a (3Z)-enoyl-CoA = a 4-saturated (2E)-enoyl-CoA. The enzyme catalyses a (3E)-enoyl-CoA = a 4-saturated (2E)-enoyl-CoA. It participates in lipid metabolism; fatty acid beta-oxidation. Involved in the aerobic and anaerobic degradation of long-chain fatty acids via beta-oxidation cycle. Catalyzes the formation of 3-oxoacyl-CoA from enoyl-CoA via L-3-hydroxyacyl-CoA. It can also use D-3-hydroxyacyl-CoA and cis-3-enoyl-CoA as substrate. This chain is Fatty acid oxidation complex subunit alpha, found in Aliivibrio fischeri (strain MJ11) (Vibrio fischeri).